Here is a 340-residue protein sequence, read N- to C-terminus: Ketol-acid reductoisomerase (NADP(+)) (340 aa).

Residues M1 to T183 form the KARI N-terminal Rossmann domain. Residues F26–Q29, R49, S52, S54, and D84–Q87 contribute to the NADP(+) site. H109 is an active-site residue. G135 provides a ligand contact to NADP(+). The 146-residue stretch at T184–I329 folds into the KARI C-terminal knotted domain. Residues D192, E196, E228, and E232 each coordinate Mg(2+). Position 253 (S253) interacts with substrate.

Belongs to the ketol-acid reductoisomerase family. Requires Mg(2+) as cofactor.

It carries out the reaction (2R)-2,3-dihydroxy-3-methylbutanoate + NADP(+) = (2S)-2-acetolactate + NADPH + H(+). It catalyses the reaction (2R,3R)-2,3-dihydroxy-3-methylpentanoate + NADP(+) = (S)-2-ethyl-2-hydroxy-3-oxobutanoate + NADPH + H(+). It participates in amino-acid biosynthesis; L-isoleucine biosynthesis; L-isoleucine from 2-oxobutanoate: step 2/4. Its pathway is amino-acid biosynthesis; L-valine biosynthesis; L-valine from pyruvate: step 2/4. Its function is as follows. Involved in the biosynthesis of branched-chain amino acids (BCAA). Catalyzes an alkyl-migration followed by a ketol-acid reduction of (S)-2-acetolactate (S2AL) to yield (R)-2,3-dihydroxy-isovalerate. In the isomerase reaction, S2AL is rearranged via a Mg-dependent methyl migration to produce 3-hydroxy-3-methyl-2-ketobutyrate (HMKB). In the reductase reaction, this 2-ketoacid undergoes a metal-dependent reduction by NADPH to yield (R)-2,3-dihydroxy-isovalerate. This Campylobacter jejuni subsp. jejuni serotype O:2 (strain ATCC 700819 / NCTC 11168) protein is Ketol-acid reductoisomerase (NADP(+)).